We begin with the raw amino-acid sequence, 303 residues long: Glucose-1-phosphate thymidylyltransferase (303 aa).

Residues D108 and D222 each contribute to the Mg(2+) site.

The protein belongs to the glucose-1-phosphate thymidylyltransferase family. Mg(2+) serves as cofactor.

It carries out the reaction dTTP + alpha-D-glucose 1-phosphate + H(+) = dTDP-alpha-D-glucose + diphosphate. Its function is as follows. Catalyzes the formation of dTDP-glucose, from dTTP and glucose 1-phosphate, as well as its pyrophosphorolysis. In terms of biological role, probably involved in the biosynthesis of the acarviose moiety of the alpha-glucosidase inhibitor acarbose. This chain is Glucose-1-phosphate thymidylyltransferase (acbA), found in Actinoplanes sp. (strain ATCC 31044 / CBS 674.73 / SE50/110).